Consider the following 96-residue polypeptide: ASNSD1 upstream open reading frame protein (96 aa).

Positions 1-10 (MPSRGTRPED) are enriched in basic and acidic residues. Positions 1–28 (MPSRGTRPEDSSVLIPTDNSTPHKEDLS) are disordered. The stretch at 23–96 (HKEDLSSKIK…ENLDKTKIKK (74 aa)) forms a coiled coil.

As to quaternary structure, component of the PAQosome complex which is responsible for the biogenesis of several protein complexes and which consists of R2TP complex members RUVBL1, RUVBL2, RPAP3 and PIH1D1, URI complex members PFDN2, PFDN6, PDRG1, UXT and URI1 as well as ASDURF, POLR2E and DNAAF10/WDR92.

It is found in the cytoplasm. The chain is ASNSD1 upstream open reading frame protein from Homo sapiens (Human).